The following is a 291-amino-acid chain: Small ribosomal subunit protein uS2 (291 aa).

The segment covering D238–E247 has biased composition (acidic residues). The tract at residues D238 to R291 is disordered. The span at V249–T259 shows a compositional bias: basic and acidic residues. Over residues V274 to R291 the composition is skewed to acidic residues.

This sequence belongs to the universal ribosomal protein uS2 family.

This Treponema pallidum (strain Nichols) protein is Small ribosomal subunit protein uS2 (rpsB).